Here is a 180-residue protein sequence, read N- to C-terminus: Symerythrin (180 aa).

The 3-(L-phenylalan-2'-yl)-L-valine (Phe-Val) cross-link spans 17–127 (FQDAVSHNNT…RRALETALEV (111 aa)). A Ferritin-like diiron domain is found at 21–180 (VSHNNTDANA…RALENLLEVA (160 aa)). Glu-37, Glu-40, Glu-71, Glu-128, Glu-131, Glu-162, and His-165 together coordinate Fe(3+).

In terms of assembly, monomer. The cofactor is Fe(3+).

It localises to the plastid. Its subcellular location is the cyanelle. Functionally, exhibits oxidase-like and peroxidase-like activities in vitro. The sequence is that of Symerythrin from Cyanophora paradoxa.